The following is a 1639-amino-acid chain: Merozoite surface protein 1 (1639 aa).

An N-terminal signal peptide occupies residues methionine 1–cysteine 19. Polar residues-rich tracts occupy residues serine 58–proline 67 and asparagine 107–aspartate 119. 2 disordered regions span residues serine 58–serine 78 and valine 94–alanine 122. N-linked (GlcNAc...) asparagine glycosylation is found at asparagine 116 and asparagine 268. The segment at lysine 689–asparagine 764 is disordered. 2 stretches are compositionally biased toward polar residues: residues threonine 694–serine 704 and glycine 711–glycine 722. Over residues valine 730–glutamine 741 the composition is skewed to low complexity. Asparagine 764, asparagine 768, asparagine 783, and asparagine 844 each carry an N-linked (GlcNAc...) asparagine glycan. The interval serine 893–histidine 915 is disordered. N-linked (GlcNAc...) asparagine glycans are attached at residues asparagine 920, asparagine 964, asparagine 1058, asparagine 1165, and asparagine 1174. The segment at glutamine 1002–tyrosine 1116 is required for binding to host erythrocyte cell membrane. The segment covering valine 1199 to proline 1212 has biased composition (polar residues). Residues valine 1199 to threonine 1229 form a disordered region. 2 N-linked (GlcNAc...) asparagine glycosylation sites follow: asparagine 1445 and asparagine 1526. EGF-like domains follow at residues histidine 1530–proline 1570 and asparagine 1571–serine 1618. 6 cysteine pairs are disulfide-bonded: cysteine 1532/cysteine 1543, cysteine 1537/cysteine 1553, cysteine 1555/cysteine 1566, cysteine 1574/cysteine 1587, cysteine 1581/cysteine 1601, and cysteine 1603/cysteine 1617. Serine 1618 carries the GPI-anchor amidated serine lipid modification. Residues serine 1619 to isoleucine 1639 constitute a propeptide, removed in mature form.

In terms of assembly, forms a complex composed of subunits p83, p30, p38, and p42 which remain non-covalently associated; the complex is formed at the merozoite surface prior to egress from host erythrocytes. Forms a complex composed of processed MSP1 subunits, MSP6 subunit p36 and MSP7; the complex is formed at the merozoite surface prior to egress from host erythrocytes. Within the complex, interacts (via subunit p38) with MSP6 subunit p36 and (via subunits p83, p30 and p38) with MSP7 (via subunit p22). Forms a complex composed of MSP1, MSP6, DBLMSP1 and DBLMSP2. Within the complex, interacts (via subunit p38) with DBLMSP1 and DBLMSP2. Forms a complex composed of MSP1, and rhoptry proteins RhopH3, RAP1 and CLAG9/RhopH3. Within the complex, interacts (via subunits p42 and p19) with RhopH3 (via C-terminus). Forms a complex composed of MSP1, MSP6, MSP7, MSP9 and MSP3; within the complex, MSP6 and MSP9 mediate the binding to the host erythrocyte. Interacts (via subunits p19 and p42) with MSP9; the interaction is direct; MSP1 subunits p19 or p42, and MSP9 form a co-ligand complex that interacts with host SLC4A1/Band 3 protein. May interact with PFD6. Interacts with host spectrin. As to quaternary structure, interacts with host glycophorin GYPA in a sialic acid-independent manner. Interacts with host proinflammatory cytokine S100P; the interaction blocks S100P inflammatory and chemotactic activities. In terms of assembly, interacts with host SLC4A1/Band 3 (via 5ABC region) on the host erythrocyte surface in a sialic acid-independent manner. Post-translationally, the p190 precursor is cleaved by SUB1 prior to merozoite egress into 4 subunits p83, p30, p38, and p42 which remain non-covalently associated. SUB1-mediated proteolytic cleavage occurs in an orderly manner; the first cleavage occurs at the p83/p30 site, followed by cleavage at the p30/p38 site, the last cleavage occurs at the p38/p42 site. The order of cleavage is essential for parasite viability. SUB1-mediated processing is essential for merozoite egress. In a second processing step during erythrocyte invasion, p42 is cleaved by SUB2 into p33 and p19; the latter remains attached to the merozoite surface via its GPI-anchor and stays on the surface during the subsequent ring stage.

Its subcellular location is the cell membrane. It is found in the secreted. The protein resides in the vacuole membrane. During the asexual blood stage, involved in merozoite egress from host erythrocytes possibly via its interaction with the host cytoskeleton protein spectrin resulting in the destabilization of the host cytoskeleton and thus leading to erythrocyte cell membrane rupture. Involved in the binding to host erythrocytes and is required for host erythrocyte invasion. In terms of biological role, by binding to host proinflammatory cytokine S100P may interfere with host immune responses. Its function is as follows. Involved in merozoite invasion of host erythrocytes. May play a role in the biogenesis and/or function of the food vacuole during the intraerythrocytic development. The chain is Merozoite surface protein 1 from Plasmodium falciparum (isolate Wellcome).